Reading from the N-terminus, the 701-residue chain is CRS2-associated factor 1, chloroplastic (701 aa).

Residues 1–37 constitute a chloroplast transit peptide; sequence MSLKLNTPFPIFAPSLFPNHNPRAPSEIRFSRWGNAN. 2 disordered regions span residues 68 to 136 and 191 to 221; these read VHTH…PEVK and LPQS…QKPG. 2 consecutive CRM domains span residues 241-337 and 359-455; these read EPLT…TRPR and EGLT…LTTP. The disordered stretch occupies residues 471-532; the sequence is LPEDDEPSVS…SLQSWSTKDV (62 aa). 2 stretches are compositionally biased toward polar residues: residues 479–492 and 520–530; these read VSPN…QNPP and TINSLQSWSTK. The CRS2 binding stretch occupies residues 564–586; sequence RVLILMKQAVESGTALVLDAADL.

As to quaternary structure, interacts with CRS2 and RNA. Part of large ribonucleo-protein complexes that include group IIB introns, CRS2 and CAF1.

It is found in the plastid. Its subcellular location is the chloroplast stroma. Required for the splicing of group IIB introns in chloroplasts. Forms splicing particles with CRS2. Interacts with RNA and confers intron specificity of the splicing particles. The protein is CRS2-associated factor 1, chloroplastic of Arabidopsis thaliana (Mouse-ear cress).